The chain runs to 193 residues: MTQMSDEQFRIFIETIKSLGPIKEEPPSKGSFSNCTVRFSGQRDHDAVDEFINAVETYKEVEGISDKDALKGLPLLFKSIAVVWWKGVRRDAKTWSDALQLLRDHFSPTKPSYQIYMEIFETKQSYDEVIDSFICKQRALLAKLPEGRHDEETELDFIYGLMQPKYRESIPRHEVKTFRELLDRGRTVERTRH.

This sequence belongs to the ARC/ARG3.1 family. Homooligomer; homooligomerizes into virion-like capsids.

It is found in the extracellular vesicle membrane. Self-assembles into virion-like capsids that encapsulate RNAs and mediate intercellular RNA transfer. Arc2 protein is released from cells in extracellular vesicles that mediate the transfer of mRNA into neighboring cells. This chain is Activity-regulated cytoskeleton associated protein 2, found in Drosophila melanogaster (Fruit fly).